The sequence spans 476 residues: Bifunctional protein HldE (476 aa).

The segment at 1–318 is ribokinase; it reads MKPILPDYSQ…AEAIHGSQDT (318 aa). 195-198 is a binding site for ATP; sequence NMAE. Residue D264 is part of the active site. The segment at 344–476 is cytidylyltransferase; sequence MTNGCFDILH…IIKAIKGGRG (133 aa).

The protein in the N-terminal section; belongs to the carbohydrate kinase PfkB family. In the C-terminal section; belongs to the cytidylyltransferase family. Homodimer.

The enzyme catalyses D-glycero-beta-D-manno-heptose 7-phosphate + ATP = D-glycero-beta-D-manno-heptose 1,7-bisphosphate + ADP + H(+). It carries out the reaction D-glycero-beta-D-manno-heptose 1-phosphate + ATP + H(+) = ADP-D-glycero-beta-D-manno-heptose + diphosphate. The protein operates within nucleotide-sugar biosynthesis; ADP-L-glycero-beta-D-manno-heptose biosynthesis; ADP-L-glycero-beta-D-manno-heptose from D-glycero-beta-D-manno-heptose 7-phosphate: step 1/4. It functions in the pathway nucleotide-sugar biosynthesis; ADP-L-glycero-beta-D-manno-heptose biosynthesis; ADP-L-glycero-beta-D-manno-heptose from D-glycero-beta-D-manno-heptose 7-phosphate: step 3/4. Its function is as follows. Catalyzes the phosphorylation of D-glycero-D-manno-heptose 7-phosphate at the C-1 position to selectively form D-glycero-beta-D-manno-heptose-1,7-bisphosphate. Functionally, catalyzes the ADP transfer from ATP to D-glycero-beta-D-manno-heptose 1-phosphate, yielding ADP-D-glycero-beta-D-manno-heptose. This Vibrio atlanticus (strain LGP32) (Vibrio splendidus (strain Mel32)) protein is Bifunctional protein HldE.